The following is a 563-amino-acid chain: Putative cysteine ligase BshC (563 aa).

A coiled-coil region spans residues 474-506 (LEQSLMGTSKQAEKALDTLRQKTQRANRRKHDE).

The protein belongs to the BshC family.

In Prosthecochloris aestuarii (strain DSM 271 / SK 413), this protein is Putative cysteine ligase BshC.